We begin with the raw amino-acid sequence, 68 residues long: Protein SlyX homolog (68 aa).

Belongs to the SlyX family.

This Brucella anthropi (strain ATCC 49188 / DSM 6882 / CCUG 24695 / JCM 21032 / LMG 3331 / NBRC 15819 / NCTC 12168 / Alc 37) (Ochrobactrum anthropi) protein is Protein SlyX homolog.